We begin with the raw amino-acid sequence, 259 residues long: Deoxyribose-phosphate aldolase (259 aa).

Catalysis depends on aspartate 102, which acts as the Proton donor/acceptor. The active-site Schiff-base intermediate with acetaldehyde is lysine 167. Lysine 201 functions as the Proton donor/acceptor in the catalytic mechanism.

It belongs to the DeoC/FbaB aldolase family. DeoC type 2 subfamily.

It is found in the cytoplasm. The catalysed reaction is 2-deoxy-D-ribose 5-phosphate = D-glyceraldehyde 3-phosphate + acetaldehyde. It functions in the pathway carbohydrate degradation; 2-deoxy-D-ribose 1-phosphate degradation; D-glyceraldehyde 3-phosphate and acetaldehyde from 2-deoxy-alpha-D-ribose 1-phosphate: step 2/2. Its function is as follows. Catalyzes a reversible aldol reaction between acetaldehyde and D-glyceraldehyde 3-phosphate to generate 2-deoxy-D-ribose 5-phosphate. This Cronobacter sakazakii (strain ATCC BAA-894) (Enterobacter sakazakii) protein is Deoxyribose-phosphate aldolase.